We begin with the raw amino-acid sequence, 335 residues long: UPF0353 protein MUL_1490 (335 aa).

Helical transmembrane passes span 18–38 (WFFLFLLVVAGLIAIYVVLQL) and 67–87 (IPAMLLALSLVLFTVAMAGPT). In terms of domain architecture, VWFA spans 98–298 (VVMLVIDVSQ…SVYVSLQQQI (201 aa)). The chain crosses the membrane as a helical span at residues 309–329 (MGWLRLGALVLVAAALAALLI).

The protein belongs to the UPF0353 family.

The protein resides in the cell membrane. This Mycobacterium ulcerans (strain Agy99) protein is UPF0353 protein MUL_1490.